The primary structure comprises 211 residues: LexA repressor (211 aa).

Residues 28-48 constitute a DNA-binding region (H-T-H motif); that stretch reads VREVGEAVGLSSSSTIHGHIE. Active-site for autocatalytic cleavage activity residues include serine 132 and lysine 170.

It belongs to the peptidase S24 family. As to quaternary structure, homodimer.

The catalysed reaction is Hydrolysis of Ala-|-Gly bond in repressor LexA.. Represses a number of genes involved in the response to DNA damage (SOS response), including recA and lexA. In the presence of single-stranded DNA, RecA interacts with LexA causing an autocatalytic cleavage which disrupts the DNA-binding part of LexA, leading to derepression of the SOS regulon and eventually DNA repair. This chain is LexA repressor, found in Leuconostoc citreum (strain KM20).